A 210-amino-acid polypeptide reads, in one-letter code: Acetoin utilization protein AcuA (210 aa).

An N-acetyltransferase domain is found at L20–N161.

It belongs to the acetyltransferase family. Monomer.

The protein operates within ketone degradation; acetoin degradation. Activity is sensitive to salt concentration, a high concentration of KCL (500 mM) is needed for complete inactivation. In terms of biological role, part of the acuABC operon, which is possibly involved in the breakdown of acetoin and butanediol. Acts as an acetyltransferase inactivating acetyl-CoA synthetase AcsA via acetylation at a Lys residue. The chain is Acetoin utilization protein AcuA (acuA) from Bacillus subtilis (strain 168).